Reading from the N-terminus, the 526-residue chain is Peptide chain release factor 3 (526 aa).

In terms of domain architecture, tr-type G spans 9–277 (DKRRTFAIIS…GIVEWAPKPL (269 aa)). GTP contacts are provided by residues 18–25 (SHPDAGKT), 86–90 (DTPGH), and 140–143 (NKLD).

This sequence belongs to the TRAFAC class translation factor GTPase superfamily. Classic translation factor GTPase family. PrfC subfamily.

It is found in the cytoplasm. Its function is as follows. Increases the formation of ribosomal termination complexes and stimulates activities of RF-1 and RF-2. It binds guanine nucleotides and has strong preference for UGA stop codons. It may interact directly with the ribosome. The stimulation of RF-1 and RF-2 is significantly reduced by GTP and GDP, but not by GMP. This is Peptide chain release factor 3 from Shewanella sp. (strain ANA-3).